A 199-amino-acid chain; its full sequence is Holliday junction branch migration complex subunit RuvA (199 aa).

The domain I stretch occupies residues 1–64; the sequence is MIGRITGILL…EDGHFLYGFA (64 aa). Residues 65–143 form a domain II region; it reads SADERAAFRQ…RALPGFGAST (79 aa). Residues 144 to 152 are flexible linker; the sequence is VPGAAAQPA. Residues 152–199 form a domain III region; the sequence is ADSRSDILNALLALGYSDKEAQSALKAIPPETGVSDGIRQALKLLSKA.

It belongs to the RuvA family. Homotetramer. Forms an RuvA(8)-RuvB(12)-Holliday junction (HJ) complex. HJ DNA is sandwiched between 2 RuvA tetramers; dsDNA enters through RuvA and exits via RuvB. An RuvB hexamer assembles on each DNA strand where it exits the tetramer. Each RuvB hexamer is contacted by two RuvA subunits (via domain III) on 2 adjacent RuvB subunits; this complex drives branch migration. In the full resolvosome a probable DNA-RuvA(4)-RuvB(12)-RuvC(2) complex forms which resolves the HJ.

Its subcellular location is the cytoplasm. The RuvA-RuvB-RuvC complex processes Holliday junction (HJ) DNA during genetic recombination and DNA repair, while the RuvA-RuvB complex plays an important role in the rescue of blocked DNA replication forks via replication fork reversal (RFR). RuvA specifically binds to HJ cruciform DNA, conferring on it an open structure. The RuvB hexamer acts as an ATP-dependent pump, pulling dsDNA into and through the RuvAB complex. HJ branch migration allows RuvC to scan DNA until it finds its consensus sequence, where it cleaves and resolves the cruciform DNA. The polypeptide is Holliday junction branch migration complex subunit RuvA (Aromatoleum aromaticum (strain DSM 19018 / LMG 30748 / EbN1) (Azoarcus sp. (strain EbN1))).